The chain runs to 129 residues: MNAPQWLGAEGEKIAARHLAAKGYRIVARNYRFHRNEIDIIAFDGEALCFIEVKTRASLGKGHPAESVTRSKQKEIARAAAGYLASLDDPWITCRFDVIAVLALSIDERSIRKYEIEHIKAAFMVGDKG.

It belongs to the UPF0102 family.

This is UPF0102 protein CT2262 from Chlorobaculum tepidum (strain ATCC 49652 / DSM 12025 / NBRC 103806 / TLS) (Chlorobium tepidum).